The chain runs to 240 residues: Uridylate kinase (240 aa).

12–15 lines the ATP pocket; it reads KLSG. The segment at 20–25 is involved in allosteric activation by GTP; it reads GEQGNG. Gly-54 is a UMP binding site. Residues Gly-55 and Arg-59 each contribute to the ATP site. Residues Asp-74 and 135 to 142 each bind UMP; that span reads TGNPYFST. The ATP site is built by Asn-163, Tyr-169, and Asp-172.

It belongs to the UMP kinase family. In terms of assembly, homohexamer.

It localises to the cytoplasm. It catalyses the reaction UMP + ATP = UDP + ADP. The protein operates within pyrimidine metabolism; CTP biosynthesis via de novo pathway; UDP from UMP (UMPK route): step 1/1. With respect to regulation, allosterically activated by GTP. Inhibited by UTP. Catalyzes the reversible phosphorylation of UMP to UDP. The chain is Uridylate kinase from Bacillus velezensis (strain DSM 23117 / BGSC 10A6 / LMG 26770 / FZB42) (Bacillus amyloliquefaciens subsp. plantarum).